Consider the following 990-residue polypeptide: Sister chromatid cohesion protein PDS5 homolog E (990 aa).

5 HEAT repeats span residues 31 to 57 (DATLSLLEVMESLLATVEQDLSSSVQK), 58 to 96 (ALHPPMRALVSADLLRNPDSDVRVSVVSCLTEIMRITAP), 153 to 190 (DLVLEMFQRFLKIIRPDHPQLVLVSMETIMITVIDESE), 191 to 228 (EVPMDLLEILLTTVKKDSQDVSPAALTLVEKVLSSCTC), and 232 to 269 (PCIMEALKSSGTSLDMYSPVVSSICQSEFATTQAHNDV). A disordered region spans residues 262–565 (TTQAHNDVKP…AGEEVESNTN (304 aa)). Residues 267–281 (NDVKPKDNEADEKIS) are compositionally biased toward basic and acidic residues. The segment covering 302–314 (KGTRSKRSARGGT) has biased composition (basic residues). Polar residues-rich tracts occupy residues 328 to 342 (EGLSESTDAETASGS) and 394 to 410 (VGQTNQSVVISLSSSGR). Basic and acidic residues-rich tracts occupy residues 421-430 (TKMEETDHDV), 448-477 (PAKEDLTKSNVKKHEDGIKTGKSSKKEKAD), and 503-512 (VHSDAKKKNS). The Nuclear localization signal 1 signature appears at 458–465 (VKKHEDGI). Short sequence motifs (nuclear localization signal) lie at residues 539 to 546 (TKKSEQAP) and 583 to 590 (DKKFYEGV). Positions 653-966 (KKRKIVSKNV…VGNEAEEDDQ (314 aa)) are disordered. The segment covering 662 to 673 (VEPSSSPEVRSS) has biased composition (low complexity). 2 consecutive short sequence motifs (nuclear localization signal) follow at residues 677 to 684 (MKKKDSVT) and 715 to 722 (LKKLNGEP). The segment covering 727 to 742 (GRTGKKQKVTQAMHRK) has biased composition (basic residues). Over residues 746 to 760 (DCDEQEDLETKDEED) the composition is skewed to acidic residues. 3 stretches are compositionally biased toward basic and acidic residues: residues 761-810 (SLKL…KTNG), 819-890 (TDGK…KETN), and 898-947 (EEQK…DKET).

This sequence belongs to the PDS5 family. Interacts with the cohesin complex.

The protein resides in the nucleus. In terms of biological role, cohesin cofactor dispensable during the meiotic division but playing an important role in DNA repair by homologous recombination (HR) probably by helping SMC5/SMC6 complex. Regulator of sister chromatid cohesion in mitosis which may stabilize cohesin complex association with chromatin. May couple sister chromatid cohesion during mitosis to DNA replication. Cohesion ensures that chromosome partitioning is accurate in both meiotic and mitotic cells and plays an important role in DNA repair. This Arabidopsis thaliana (Mouse-ear cress) protein is Sister chromatid cohesion protein PDS5 homolog E.